A 278-amino-acid polypeptide reads, in one-letter code: Expansin-B17 (278 aa).

A signal peptide spans 1–26; sequence MAAASSRSFSLCVLLLLLLLAPPISA. The region spanning 66–176 is the Expansin-like EG45 domain; that stretch reads GGACGYGSLV…RRTACKYGGK (111 aa). Cystine bridges form between Cys-69/Cys-98, Cys-101/Cys-171, and Cys-106/Cys-112. The 82-residue stretch at 189–270 folds into the Expansin-like CBD domain; sequence FWLSLLVEFE…NWKPTATYTS (82 aa).

The protein belongs to the expansin family. Expansin B subfamily.

The protein resides in the secreted. It localises to the cell wall. The protein localises to the membrane. Its function is as follows. May cause loosening and extension of plant cell walls by disrupting non-covalent bonding between cellulose microfibrils and matrix glucans. No enzymatic activity has been found. May be required for rapid internodal elongation in deepwater rice during submergence. In Oryza sativa subsp. japonica (Rice), this protein is Expansin-B17 (EXPB17).